Reading from the N-terminus, the 200-residue chain is COMM domain-containing protein 7 (200 aa).

The COMM domain maps to 133-200; that stretch reads QLVDMEWKFG…RVRTSMECFS (68 aa).

It belongs to the COMM domain-containing protein 7 family. Component of the commander complex consisting of the CCC subcomplex and the retriever subcomplex. Component of the CCC (COMMD/CCDC22/CCDC93) subcomplex consisting of COMMD1, COMMD2, COMMD3, COMMD4, COMMD5, COMMD6, COMMD7, COMMD8, COMMD9, COMMD10, CCDC22 and CCDC93; within the complex forms a heterodimer with COMMD9. Interacts with RELA. Interacts with CCDC22, CCDC93, SCNN1B, CUL7.

It localises to the cytoplasmic vesicle. In terms of biological role, scaffold protein in the commander complex that is essential for endosomal recycling of transmembrane cargos; the commander complex is composed of the CCC subcomplex and the retriever subcomplex. May modulate activity of cullin-RING E3 ubiquitin ligase (CRL) complexes. Associates with the NF-kappa-B complex and suppresses its transcriptional activity. The chain is COMM domain-containing protein 7 (COMMD7) from Bos taurus (Bovine).